The chain runs to 341 residues: Glyceraldehyde-3-phosphate dehydrogenase 3.1 (341 aa).

NAD(+) contacts are provided by residues 13-14, Asp35, and Arg85; that span reads RI. D-glyceraldehyde 3-phosphate-binding positions include 157–159, Thr188, 217–218, and Arg240; these read SCT and TG. Cys158 serves as the catalytic Nucleophile. Residue Asn322 participates in NAD(+) binding.

It belongs to the glyceraldehyde-3-phosphate dehydrogenase family. Homotetramer.

Its subcellular location is the cytoplasm. The catalysed reaction is D-glyceraldehyde 3-phosphate + phosphate + NAD(+) = (2R)-3-phospho-glyceroyl phosphate + NADH + H(+). The protein operates within carbohydrate degradation; glycolysis; pyruvate from D-glyceraldehyde 3-phosphate: step 1/5. The polypeptide is Glyceraldehyde-3-phosphate dehydrogenase 3.1 (Caenorhabditis briggsae).